We begin with the raw amino-acid sequence, 423 residues long: Chitinase 1 (423 aa).

The first 22 residues, 1–22 (MLSFVKKSIALVAALQAVTALA), serve as a signal peptide directing secretion. Positions 23-34 (TPISSEAGVEKR) are excised as a propeptide. Residues 38–401 (FANAVYFTNW…STSHQGLGSQ (364 aa)) form the GH18 domain. Chitin is bound by residues 102–103 (GT) and 129–132 (GGWT). Residue Glu171 is the Proton donor of the active site. Chitin is bound by residues Tyr172, 237 to 240 (MAYD), and Trp378.

Belongs to the glycosyl hydrolase 18 family. Chitinase class V subfamily.

Its subcellular location is the secreted. The enzyme catalyses Random endo-hydrolysis of N-acetyl-beta-D-glucosaminide (1-&gt;4)-beta-linkages in chitin and chitodextrins.. This is Chitinase 1 (CHI1) from Aphanocladium album (Wheat rust fungus).